Reading from the N-terminus, the 608-residue chain is Cytoplasmic dynein 1 intermediate chain 1 (608 aa).

Basic and acidic residues-rich tracts occupy residues 1–13 (MSDK…ELER) and 20–60 (QIRE…RETE). Positions 1–106 (MSDKSDLKAE…SGDLGPLTRR (106 aa)) are disordered. Position 2 is an N-acetylserine (S2). S50 is subject to Phosphoserine. The segment covering 70–79 (PEPPLVPTPM) has biased composition (pro residues). The span at 80–90 (SPSSKSVSTPS) shows a compositional bias: low complexity. A Phosphoserine modification is found at S83. Position 88 is a phosphothreonine (T88). A phosphoserine mark is found at S90, S94, and S97. The tract at residues 110-126 (KLGVSKITQVDFLPREV) is interaction with DYNLT1. The disordered stretch occupies residues 132 to 184 (ETQTPLATHQSEEDEDDEEMVEPKGDQDSEQENEDKKQEVKEAPPRELTEEEK). T139 carries the post-translational modification Phosphothreonine. 2 positions are modified to phosphoserine: S142 and S160. A compositionally biased stretch (basic and acidic residues) spans 165 to 184 (EDKKQEVKEAPPRELTEEEK). WD repeat units follow at residues 248–297 (SKHR…TTPE), 301–341 (HCQS…RTPV), 350–391 (AHTH…TPQE), 400–440 (SKPV…AGIG), 445–490 (GHQG…PLYS), 493–533 (DNAD…EVPT), and 539–578 (EGAS…VPHN). S598 is subject to Phosphoserine.

This sequence belongs to the dynein intermediate chain family. In terms of assembly, homodimer. The cytoplasmic dynein 1 complex consists of two catalytic heavy chains (HCs) and a number of non-catalytic subunits presented by intermediate chains (ICs), light intermediate chains (LICs) and light chains (LCs); the composition seems to vary in respect to the IC, LIC and LC composition. The heavy chain homodimer serves as a scaffold for the probable homodimeric assembly of the respective non-catalytic subunits. The ICs and LICs bind directly to the HC dimer and the LCs assemble on the IC dimer. Interacts with DYNC1H1. Interacts with DYNLT1 and DYNLT3. Interacts with DCTN1. Interacts with MCRS1; the interaction is required for the proper distribution of centriolar satellites.

It localises to the cytoplasm. The protein resides in the chromosome. It is found in the centromere. The protein localises to the kinetochore. Its subcellular location is the cytoskeleton. It localises to the spindle pole. Its function is as follows. Acts as one of several non-catalytic accessory components of the cytoplasmic dynein 1 complex that are thought to be involved in linking dynein to cargos and to adapter proteins that regulate dynein function. Cytoplasmic dynein 1 acts as a motor for the intracellular retrograde motility of vesicles and organelles along microtubules. The intermediate chains mediate the binding of dynein to dynactin via its 150 kDa component (p150-glued) DCTN1. May play a role in mediating the interaction of cytoplasmic dynein with membranous organelles and kinetochores. The chain is Cytoplasmic dynein 1 intermediate chain 1 (DYNC1I1) from Bos taurus (Bovine).